The primary structure comprises 202 residues: Nucleoid occlusion factor SlmA (202 aa).

The region spanning 14-75 is the HTH tetR-type domain; it reads KERQQQVLEV…ALIERIEQTL (62 aa). The segment at residues 38–57 is a DNA-binding region (H-T-H motif); that stretch reads TTERLAKAVGVSEGALYRYF.

Belongs to the nucleoid occlusion factor SlmA family. Homodimer. Interacts with FtsZ.

It is found in the cytoplasm. The protein resides in the nucleoid. Required for nucleoid occlusion (NO) phenomenon, which prevents Z-ring formation and cell division over the nucleoid. Acts as a DNA-associated cell division inhibitor that binds simultaneously chromosomal DNA and FtsZ, and disrupts the assembly of FtsZ polymers. SlmA-DNA-binding sequences (SBS) are dispersed on non-Ter regions of the chromosome, preventing FtsZ polymerization at these regions. The chain is Nucleoid occlusion factor SlmA from Actinobacillus pleuropneumoniae serotype 5b (strain L20).